The primary structure comprises 400 residues: NADH dehydrogenase-like protein MT1860 (400 aa).

Belongs to the NADH dehydrogenase family. Requires FAD as cofactor.

The chain is NADH dehydrogenase-like protein MT1860 from Mycobacterium tuberculosis (strain CDC 1551 / Oshkosh).